The primary structure comprises 293 residues: Elongation factor Ts (293 aa).

The involved in Mg(2+) ion dislocation from EF-Tu stretch occupies residues 79–82 (TDFV).

It belongs to the EF-Ts family.

Its subcellular location is the cytoplasm. Associates with the EF-Tu.GDP complex and induces the exchange of GDP to GTP. It remains bound to the aminoacyl-tRNA.EF-Tu.GTP complex up to the GTP hydrolysis stage on the ribosome. This chain is Elongation factor Ts, found in Exiguobacterium sibiricum (strain DSM 17290 / CCUG 55495 / CIP 109462 / JCM 13490 / 255-15).